The chain runs to 550 residues: Methionine--tRNA ligase (550 aa).

The short motif at 14 to 24 (PYANGSLHIGH) is the 'HIGH' region element. Residues C145, C148, C158, and C161 each coordinate Zn(2+). Residues 331 to 335 (KMSKS) carry the 'KMSKS' region motif. K334 is an ATP binding site.

The protein belongs to the class-I aminoacyl-tRNA synthetase family. MetG type 1 subfamily. Monomer. Requires Zn(2+) as cofactor.

The protein localises to the cytoplasm. It carries out the reaction tRNA(Met) + L-methionine + ATP = L-methionyl-tRNA(Met) + AMP + diphosphate. Functionally, is required not only for elongation of protein synthesis but also for the initiation of all mRNA translation through initiator tRNA(fMet) aminoacylation. In Wigglesworthia glossinidia brevipalpis, this protein is Methionine--tRNA ligase.